The primary structure comprises 235 residues: Large ribosomal subunit protein uL3 (235 aa).

This sequence belongs to the universal ribosomal protein uL3 family. Part of the 50S ribosomal subunit. Forms a cluster with proteins L14 and L19.

Functionally, one of the primary rRNA binding proteins, it binds directly near the 3'-end of the 23S rRNA, where it nucleates assembly of the 50S subunit. This is Large ribosomal subunit protein uL3 from Frankia casuarinae (strain DSM 45818 / CECT 9043 / HFP020203 / CcI3).